A 354-amino-acid polypeptide reads, in one-letter code: MRFDLEPPSSVAAAHRIGVLLINLGTPDAPTPRAVRRYLAEFLSDPRVVEIPQAVWQVLLRTLILPLRGRASAKKYAAVWMPEGSPLRVYTERQTDSVRHLLTSNGYHVMVDYAMRYGSPNISHALTQFKRAGVERVLLMPMYPQYSASTTATAFDAAFDALARMRNQPEVRTVRHYADHPAYIHALAEQVRQYWAQHGRPDFAAGDKLVLSFHGVPKRTLDLGDPYHDQCQQTGALLMAALGLSTTECHVTFQSRFGKAEWLQPYTAPTLREFGEAGVRRADVFCPGFTADCLETIEEIGMEVRDEFLAGGGKTFHRIPCLNGASAWIGALSEIVAENLQGWPVKAAQPEPVN.

Fe cation-binding residues include His214 and Glu295.

It belongs to the ferrochelatase family.

The protein localises to the cytoplasm. The enzyme catalyses heme b + 2 H(+) = protoporphyrin IX + Fe(2+). Its pathway is porphyrin-containing compound metabolism; protoheme biosynthesis; protoheme from protoporphyrin-IX: step 1/1. Catalyzes the ferrous insertion into protoporphyrin IX. This is Ferrochelatase from Burkholderia orbicola (strain AU 1054).